Here is a 291-residue protein sequence, read N- to C-terminus: Nucleotide-binding protein lin2617 (291 aa).

13-20 lines the ATP pocket; sequence GMSGAGKT. Residue 63-66 coordinates GTP; sequence DLRG.

The protein belongs to the RapZ-like family.

In terms of biological role, displays ATPase and GTPase activities. This is Nucleotide-binding protein lin2617 from Listeria innocua serovar 6a (strain ATCC BAA-680 / CLIP 11262).